The sequence spans 177 residues: Large ribosomal subunit protein uL6 (177 aa).

N6-acetyllysine is present on Lys-44.

This sequence belongs to the universal ribosomal protein uL6 family. Part of the 50S ribosomal subunit.

Functionally, this protein binds to the 23S rRNA, and is important in its secondary structure. It is located near the subunit interface in the base of the L7/L12 stalk, and near the tRNA binding site of the peptidyltransferase center. The sequence is that of Large ribosomal subunit protein uL6 from Escherichia coli O139:H28 (strain E24377A / ETEC).